The chain runs to 212 residues: Thymidylate kinase (212 aa).

10–17 provides a ligand contact to ATP; the sequence is GLEGAGKT.

The protein belongs to the thymidylate kinase family.

It carries out the reaction dTMP + ATP = dTDP + ADP. In terms of biological role, phosphorylation of dTMP to form dTDP in both de novo and salvage pathways of dTTP synthesis. In Serratia proteamaculans (strain 568), this protein is Thymidylate kinase.